The sequence spans 442 residues: tRNA-2-methylthio-N(6)-dimethylallyladenosine synthase (442 aa).

Residues Lys5–Ser122 form the MTTase N-terminal domain. [4Fe-4S] cluster-binding residues include Cys14, Cys51, Cys85, Cys159, Cys163, and Cys166. One can recognise a Radical SAM core domain in the interval Lys145–Ile378. The TRAM domain maps to Arg380–Ile442.

Belongs to the methylthiotransferase family. MiaB subfamily. As to quaternary structure, monomer. [4Fe-4S] cluster is required as a cofactor.

Its subcellular location is the cytoplasm. It carries out the reaction N(6)-dimethylallyladenosine(37) in tRNA + (sulfur carrier)-SH + AH2 + 2 S-adenosyl-L-methionine = 2-methylsulfanyl-N(6)-dimethylallyladenosine(37) in tRNA + (sulfur carrier)-H + 5'-deoxyadenosine + L-methionine + A + S-adenosyl-L-homocysteine + 2 H(+). In terms of biological role, catalyzes the methylthiolation of N6-(dimethylallyl)adenosine (i(6)A), leading to the formation of 2-methylthio-N6-(dimethylallyl)adenosine (ms(2)i(6)A) at position 37 in tRNAs that read codons beginning with uridine. In Francisella philomiragia subsp. philomiragia (strain ATCC 25017 / CCUG 19701 / FSC 153 / O#319-036), this protein is tRNA-2-methylthio-N(6)-dimethylallyladenosine synthase.